The sequence spans 256 residues: Type III pantothenate kinase (256 aa).

ATP is bound at residue 6 to 13; the sequence is DAGNSRIK. Residues Tyr-90 and 97–100 contribute to the substrate site; that span reads GSDR. Catalysis depends on Asp-99, which acts as the Proton acceptor. Residue Thr-123 coordinates ATP. Thr-187 contributes to the substrate binding site.

This sequence belongs to the type III pantothenate kinase family. As to quaternary structure, homodimer. NH4(+) is required as a cofactor. Requires K(+) as cofactor.

Its subcellular location is the cytoplasm. The enzyme catalyses (R)-pantothenate + ATP = (R)-4'-phosphopantothenate + ADP + H(+). Its pathway is cofactor biosynthesis; coenzyme A biosynthesis; CoA from (R)-pantothenate: step 1/5. Catalyzes the phosphorylation of pantothenate (Pan), the first step in CoA biosynthesis. The chain is Type III pantothenate kinase from Burkholderia mallei (strain ATCC 23344).